We begin with the raw amino-acid sequence, 283 residues long: Phosphatidylglycerol--prolipoprotein diacylglyceryl transferase (283 aa).

A run of 7 helical transmembrane segments spans residues 21–41 (LAVR…LWLA), 60–80 (LLFA…VLFY), 95–115 (VWTG…AMLW), 124–144 (FFTI…AGRL), 176–196 (SQLY…NWFI), 203–223 (GAVS…VEYV), and 239–259 (MGQI…LWAF). Arg-143 is a binding site for a 1,2-diacyl-sn-glycero-3-phospho-(1'-sn-glycerol).

The protein belongs to the Lgt family.

It is found in the cell inner membrane. It catalyses the reaction L-cysteinyl-[prolipoprotein] + a 1,2-diacyl-sn-glycero-3-phospho-(1'-sn-glycerol) = an S-1,2-diacyl-sn-glyceryl-L-cysteinyl-[prolipoprotein] + sn-glycerol 1-phosphate + H(+). It participates in protein modification; lipoprotein biosynthesis (diacylglyceryl transfer). Catalyzes the transfer of the diacylglyceryl group from phosphatidylglycerol to the sulfhydryl group of the N-terminal cysteine of a prolipoprotein, the first step in the formation of mature lipoproteins. This chain is Phosphatidylglycerol--prolipoprotein diacylglyceryl transferase, found in Aliivibrio fischeri (strain MJ11) (Vibrio fischeri).